Reading from the N-terminus, the 309-residue chain is MADLQAVLDSIHAELSPRLGEGKVADYIPELAKVDPNQFGMAIATVDGNIHSVGHADVPFSIQSISKVFMLTLALGKVGESLWNRVGREPSGTAFNSIVQLEREEGIPRNPFVNAGAIAVSDVVLSGHAPREAIGELLRFVRYVADDESITIDDKVARSETQTGFRNFALANFMRAYGNIDHPVEHVLGVYFHQCAVSMSCQQLAKAGLYLAARGTNPITGHSVVSPKRARRINALMLTCGHYDGSGDFAYHVGLPGKSGVGGGILAVAPGIGSIAVWSPGLNKVGNSQLGAVALEMLAARTGWSVFGD.

The substrate site is built by Ser-64, Asn-114, Glu-160, Asn-167, Tyr-191, Tyr-243, and Val-261.

It belongs to the glutaminase family. As to quaternary structure, homotetramer.

The enzyme catalyses L-glutamine + H2O = L-glutamate + NH4(+). In Rhizobium rhizogenes (strain K84 / ATCC BAA-868) (Agrobacterium radiobacter), this protein is Glutaminase.